Reading from the N-terminus, the 507-residue chain is Arabinose import ATP-binding protein AraG (507 aa).

ABC transporter domains are found at residues 14 to 249 (LRFN…MVGR) and 249 to 505 (RDIQ…LPRT). Position 46–53 (46–53 (GENGAGKS)) interacts with ATP.

The protein belongs to the ABC transporter superfamily. Arabinose importer (TC 3.A.1.2.2) family. The complex is composed of two ATP-binding proteins (AraG), two transmembrane proteins (AraH) and a solute-binding protein (AraF).

It is found in the cell inner membrane. It catalyses the reaction L-arabinose(out) + ATP + H2O = L-arabinose(in) + ADP + phosphate + H(+). Functionally, part of the ABC transporter complex AraFGH involved in arabinose import. Responsible for energy coupling to the transport system. The protein is Arabinose import ATP-binding protein AraG of Pseudomonas savastanoi pv. phaseolicola (strain 1448A / Race 6) (Pseudomonas syringae pv. phaseolicola (strain 1448A / Race 6)).